The sequence spans 142 residues: MSSKTDTLELSVTATTATDALYWLEHIALRDRWSARLRFTLTLCADEALNNIVSHAFTPGHPAAIHLTLRQTRREVSLHIADNGAAYDPTQALSPPLARSLDDAQPGGHGLRLMRHFMHALSYQRRDGWNHLTLTSHSAPES.

It belongs to the anti-sigma-factor family. Probably able to multimerize; interacts with BtrV.

It catalyses the reaction L-seryl-[protein] + ATP = O-phospho-L-seryl-[protein] + ADP + H(+). The catalysed reaction is L-threonyl-[protein] + ATP = O-phospho-L-threonyl-[protein] + ADP + H(+). Its function is as follows. Possible negative regulator of sigma-B activity. Phosphorylates and inactivates its specific antagonist protein, BtrV. Upon phosphorylation of BtrV, BtrW is released and binds to an unknown partner(s) that might be sigma-B, thereby blocking its ability to form a complex with its partner (possibly an RNA polymerase holoenzyme (E-sigma-B)). Involved in type III secretion system (T3SS). Phosphorylates BtrV. The protein is Serine/threonine-protein kinase BtrW (btrW) of Bordetella bronchiseptica (strain ATCC BAA-588 / NCTC 13252 / RB50) (Alcaligenes bronchisepticus).